Consider the following 364-residue polypeptide: MEINNRVAIGMSGGVDSSVAAYLLKKQGFDVIGLTMRVWVDHEAKAFDSDKSCCSLKATQDAKKVAEILGIPHYTVDLSKIFYDKIVNYFVNEYLKGRTPNPCVLCNRQIKFGELLEKAFELGAYYIATGHYVRKEYDEKTKRYLLKKGIDSSKDQSYVLYRLTQKQLEHALFPLGNYKKEEIRALAEELKLPVAKKPESQEICFIPDNDYSGLIKRQVKDEIKPGEFRDVHGKFLGYHKGIIHYTIGQRRGLGLSSDRPLYVVDIDVKNNVVVVGHQEDVWGEELISSNNNFISIEKLEKEMKVTAKIRYTAKEEEAIIKPYEEDKVLVKFLKPQRAITPGQSVVFYDKDVVVGGGIIERKLK.

ATP-binding positions include 10 to 17 (GMSGGVDS) and M36. C106 serves as the catalytic Nucleophile. An intrachain disulfide couples C106 to C204. G130 contributes to the ATP binding site. The interval 154–156 (KDQ) is interaction with tRNA. The active-site Cysteine persulfide intermediate is the C204. The tract at residues 310–311 (RY) is interaction with tRNA.

The protein belongs to the MnmA/TRMU family.

The protein resides in the cytoplasm. It carries out the reaction S-sulfanyl-L-cysteinyl-[protein] + uridine(34) in tRNA + AH2 + ATP = 2-thiouridine(34) in tRNA + L-cysteinyl-[protein] + A + AMP + diphosphate + H(+). Its function is as follows. Catalyzes the 2-thiolation of uridine at the wobble position (U34) of tRNA, leading to the formation of s(2)U34. This chain is tRNA-specific 2-thiouridylase MnmA 2, found in Thermoanaerobacter pseudethanolicus (strain ATCC 33223 / 39E) (Clostridium thermohydrosulfuricum).